The sequence spans 333 residues: Small GTPase-like protein LIP2 (333 aa).

A small GTPase-like region spans residues 11 to 288 (NKEHMVAPLC…YKYNTLPQHN (278 aa)). Residues 29–36 (GDSGVGKS), 90–94 (DVSGH), and 160–163 (NKAD) each bind GTP. The span at 242–253 (SPSSAWSLSHAP) shows a compositional bias: polar residues. The disordered stretch occupies residues 242–265 (SPSSAWSLSHAPSQRLDEGTSDED).

Belongs to the small GTPase superfamily.

This is Small GTPase-like protein LIP2 from Arabidopsis thaliana (Mouse-ear cress).